A 596-amino-acid polypeptide reads, in one-letter code: MSSSNLAGNTNTTTTSSAASAAAAHSAANASTITSEYSTTQTTTGTFNTDTLSSIGSTSTLHGSQPSQPPPPPPPQVSSPIAAAAAASAALVAQLNPADRWPTEPSAYKLDESIGVGATATVFTAYCLPRNEKVAIKCINLEKCQTSVDELSHEIQAMSQCNHPNVVSYYTSFIAQEELWVVMRLLNCGSMLDILKRKVKAIGKEQAQFGVLDEVSIATVLREVLKGLEYFHLNGQIHRDIKAGNILLADDGTIQIADFGVSGWLASSGGDLSRQKVRHTFVGTPCWMAPEVMEQVQGYDFKADIWSLGILAIELATGTAPYHKYPPMKVLMLTLQNDPPTLETNAERKDQYKAYGKSFKTLIRDCLQKDPAKRPTASELLKYSFFKKGKDKKYLVHTLIENLASVPVVAHHSSKKVASGKLRKDAHGNWEFEYDSPQESDDDSDLEDEEREKKKKKASASASGAGAAGAAGGATGGAASGAPSAQEGGGATTPCPETLNMVLRVRNQQRELNDIKFDYTKSADTVEGIAHELVTAELIDCHDLVIVAANLQKLIDFAESKSDRRSITFALNSGVHANEIPDERTLTGFAQISLLD.

A compositionally biased stretch (low complexity) spans 1–54; it reads MSSSNLAGNTNTTTTSSAASAAAAHSAANASTITSEYSTTQTTTGTFNTDTLSS. A disordered region spans residues 1–80; that stretch reads MSSSNLAGNT…PPPPPQVSSP (80 aa). Residues threonine 13 and threonine 32 each carry the phosphothreonine; by autocatalysis modification. A compositionally biased stretch (pro residues) spans 67–77; the sequence is SQPPPPPPPQV. Residues 108–386 enclose the Protein kinase domain; that stretch reads YKLDESIGVG…ASELLKYSFF (279 aa). Residues 114-122 and lysine 137 each bind ATP; that span reads IGVGATATV. Position 190 is a phosphoserine; by autocatalysis (serine 190). Aspartate 240 serves as the catalytic Proton acceptor. The residue at position 280 (threonine 280) is a Phosphothreonine. The residue at position 405 (serine 405) is a Phosphoserine; by autocatalysis. Serine 419 carries the post-translational modification Phosphoserine. Residues 429-496 form a disordered region; the sequence is NWEFEYDSPQ…EGGGATTPCP (68 aa). Acidic residues predominate over residues 432–450; the sequence is FEYDSPQESDDDSDLEDEE. Gly residues predominate over residues 466–479; sequence GAAGAAGGATGGAA.

The protein belongs to the protein kinase superfamily. STE Ser/Thr protein kinase family. STE20 subfamily. In terms of assembly, interacts (via C-terminus) with clh-3; required for the phosphorylation-mediated inhibition of clh-3 function. Interacts (via C-terminus) with wnk-1; the interaction is direct. Post-translationally, phosphorylated at Thr-280 and Ser-419 probably by wnk-1; phosphorylation results in weak activation. Predominantly autophosphorylated at Thr-32 and Ser-190 and weakly autophosphorylated at Thr-13 and Ser-405 in vitro. Ubiquitously expressed with a higher expression in the excretory cell. Expressed in both male and female germ cells; up-regulated in maturing spermatocytes but absent in mature sperm.

Its subcellular location is the cytoplasm. The protein resides in the nucleus. The catalysed reaction is L-seryl-[protein] + ATP = O-phospho-L-seryl-[protein] + ADP + H(+). The enzyme catalyses L-threonyl-[protein] + ATP = O-phospho-L-threonyl-[protein] + ADP + H(+). Functionally, plays a role in osmotic stress responses by regulating ion homeostasis and by controlling cell volume via the phosphorylation-mediated inhibition of the chloride channel clh-3. In addition, increases gpdh-1 translation upon osmotic stress, likely downstream of wnk-1. Involved in several developmental processes including the tubular formation of the excretory canals, the formation of the intestine and the progression through larval stages. In addition, required for germ line development by controlling meiosis and chromosomal segregation during spermatogenesis. By controlling clh-3 activity, may regulate the development of the excretory canals and fertility. The polypeptide is Germinal center kinase 3 (Caenorhabditis elegans).